A 430-amino-acid polypeptide reads, in one-letter code: Nucleoporin NUP42 (430 aa).

The interval 1–68 (MSAFGNPFTS…AFGMPQFGTN (68 aa)) is disordered. The stretch at 2–5 (SAFG) is one SXFG 1 repeat. Residues 15–36 (NLSNTSGINPFTNNAASTNNMG) are compositionally biased toward polar residues. 2 SAFGXPXFG repeats span residues 38 to 46 (SAFGRPSFG) and 58 to 66 (SAFGMPQFG). The span at 45-68 (FGTANTMTGGTTTSAFGMPQFGTN) shows a compositional bias: low complexity. The stretch at 78 to 81 (SAFG) is one SXFG 2 repeat. 2 SAFGXPXFG repeats span residues 90–98 (SAFGAPAFG) and 112–120 (SAFGAPSFG). The segment at 121 to 230 (STGFGAMAAT…QNTSTSSGTG (110 aa)) is interactions with CRM1 and GFD1. 2 FG repeats span residues 124–125 (FG) and 134–135 (FG). Ser137 is subject to Phosphoserine. One copy of the SAFGXPXFG 5 repeat lies at 143 to 151 (SAFGQPAFG). SXFG repeat units follow at residues 168-171 (SAFG) and 182-185 (SPFG). The segment at 180–294 (TTSPFGSLQQ…QSPFSGGSGG (115 aa)) is disordered. Residues 186-201 (SLQQNASQNASSTSSA) are compositionally biased toward low complexity. The SAFGXPXFG 6 repeat unit spans residues 200–208 (SAFGKPTFG). Polar residues predominate over residues 209–230 (AATNTQSPFGTIQNTSTSSGTG). SXFG repeat units follow at residues 215–218 (SPFG) and 232–235 (SPFG). Polar residues-rich tracts occupy residues 237 to 252 (FGTN…NLQS) and 260 to 285 (PFGT…TNNQ). 2 SXFG repeats span residues 259–262 (SPFG) and 277–280 (SAFG). The stretch at 296 to 297 (FG) is one FG 3 repeat. A Phosphoserine modification is found at Ser298. Residues 312 to 315 (SSFG) form an SXFG 9 repeat. FG repeat units follow at residues 319-322 (FSFG), 339-340 (FG), and 361-364 (FGFG). The interval 319-346 (FSFGITPQNDANKVSQSNPSFGQTMPNT) is disordered. Residues 323–346 (ITPQNDANKVSQSNPSFGQTMPNT) show a composition bias toward polar residues. An interaction with GLE1 region spans residues 365-430 (QQQMNATNVN…DIPPPPALVA (66 aa)).

In terms of assembly, component of the nuclear pore complex (NPC). NPC constitutes the exclusive means of nucleocytoplasmic transport. NPCs allow the passive diffusion of ions and small molecules and the active, nuclear transport receptor-mediated bidirectional transport of macromolecules such as proteins, RNAs, ribonucleoparticles (RNPs), and ribosomal subunits across the nuclear envelope. Due to its 8-fold rotational symmetry, all subunits are present with 8 copies or multiples thereof. NUP42 interacts with the NUP82 subcomplex. It interacts directly with GLE1, and through its FG repeats with GFD1, the heterodimeric mRNA transport factor MEX67/MTR2, and the karyopherin CRM1.

The protein resides in the nucleus. The protein localises to the nuclear pore complex. It is found in the nucleus membrane. In terms of biological role, functions as a component of the nuclear pore complex (NPC). NPC components, collectively referred to as nucleoporins (NUPs), can play the role of both NPC structural components and of docking or interaction partners for transiently associated nuclear transport factors. Active directional transport is assured by both, a Phe-Gly (FG) repeat affinity gradient for these transport factors across the NPC and a transport cofactor concentration gradient across the nuclear envelope (GSP1 and GSP2 GTPases associated predominantly with GTP in the nucleus, with GDP in the cytoplasm). NUP42 is specifically important for nuclear protein and mRNA export. In Saccharomyces cerevisiae (strain ATCC 204508 / S288c) (Baker's yeast), this protein is Nucleoporin NUP42 (NUP42).